Here is a 119-residue protein sequence, read N- to C-terminus: Large ribosomal subunit protein bL20c (119 aa).

Belongs to the bacterial ribosomal protein bL20 family.

It localises to the plastid. The protein localises to the chloroplast. Its function is as follows. Binds directly to 23S ribosomal RNA and is necessary for the in vitro assembly process of the 50S ribosomal subunit. It is not involved in the protein synthesizing functions of that subunit. The chain is Large ribosomal subunit protein bL20c (rpl20) from Zea mays (Maize).